A 414-amino-acid chain; its full sequence is Snake venom metalloproteinase atrolysin-D (414 aa).

The first 20 residues, 1-20 (MIEVLLVTICLAVFPYQGSS), serve as a signal peptide directing secretion. The propeptide occupies 21–190 (IILESGNVND…KASDLNLNPD (170 aa)). A Pyrrolidone carboxylic acid modification is found at glutamine 191. A Peptidase M12B domain is found at 197–393 (RYIELVVVAD…YKPQCILNKP (197 aa)). Ca(2+) contacts are provided by glutamate 200 and aspartate 284. 2 disulfides stabilise this stretch: cysteine 308/cysteine 388 and cysteine 348/cysteine 355. Histidine 333 is a binding site for Zn(2+). Residue glutamate 334 is part of the active site. Zn(2+) is bound by residues histidine 337 and histidine 343. Ca(2+) contacts are provided by cysteine 388 and asparagine 391. A propeptide spanning residues 394–414 (LRIDPVSTPVSGNELLEAGEE) is cleaved from the precursor.

The protein belongs to the venom metalloproteinase (M12B) family. P-I subfamily. As to quaternary structure, monomer. The cofactor is Zn(2+). In terms of processing, the N-terminus is blocked. In terms of tissue distribution, expressed by the venom gland.

It localises to the secreted. It catalyses the reaction Cleavage of 5-His-|-Leu-6, 10-His-|-Leu-11, 14-Ala-|-Leu-15, 16-Tyr-|-Leu-17 and 23-Gly-|-Phe-24 of insulin B chain. With small molecule substrates prefers hydrophobic residue at P2' and small residue such as Ala, Gly at P1.. Snake venom zinc metalloproteinase that causes hemorrhage by provoking the degradation of the sub-endothelial matrix proteins (fibronectin, laminin, type IV collagen, nidogen, and gelatins). In Crotalus atrox (Western diamondback rattlesnake), this protein is Snake venom metalloproteinase atrolysin-D.